The following is a 265-amino-acid chain: Orotidine 5'-phosphate decarboxylase (265 aa).

Residues Asp38, 60 to 62, 91 to 100, Tyr213, and Arg232 each bind substrate; these read KTH and DRKFADIGNT. Lys93 (proton donor) is an active-site residue.

This sequence belongs to the OMP decarboxylase family.

The enzyme catalyses orotidine 5'-phosphate + H(+) = UMP + CO2. Its pathway is pyrimidine metabolism; UMP biosynthesis via de novo pathway; UMP from orotate: step 2/2. This Mucor circinelloides f. lusitanicus (Mucor racemosus var. lusitanicus) protein is Orotidine 5'-phosphate decarboxylase (pyrG).